The following is a 66-amino-acid chain: Large ribosomal subunit protein bL35 (66 aa).

Residues 1 to 26 (MPKMKTHRGSAKRFKKTASGKLKRGH) show a composition bias toward basic residues. The disordered stretch occupies residues 1 to 29 (MPKMKTHRGSAKRFKKTASGKLKRGHAYT).

This sequence belongs to the bacterial ribosomal protein bL35 family.

This Geobacillus kaustophilus (strain HTA426) protein is Large ribosomal subunit protein bL35.